A 418-amino-acid chain; its full sequence is Lactosylceramide alpha-2,3-sialyltransferase (418 aa).

Residues 1–25 (MRTKAAGCAERRPLQPRTEAAAAPA) are disordered. Over 1 to 61 (MRTKAAGCAE…RAQSKMRRPS (61 aa)) the chain is Cytoplasmic. The helical; Signal-anchor for type II membrane protein transmembrane segment at 62–82 (LLLKDILKCTLLVFGVWILYI) threads the bilayer. The Lumenal portion of the chain corresponds to 83 to 418 (LKLNYTTEEC…DLSGGIDREF (336 aa)). N-linked (GlcNAc...) asparagine glycans are attached at residues Asn86, Asn236, and Asn390. An intrachain disulfide couples Cys195 to Cys353.

The protein belongs to the glycosyltransferase 29 family. In terms of processing, N-glycosylated. Ubiquitous. High expression in brain, skeletal muscle, placenta, and testis. mRNA widely distributed in human brain, but slightly elevated expression was observed in the cerebral cortex, temporal lobe, and putamen.

The protein resides in the golgi apparatus membrane. It carries out the reaction a beta-D-Gal-(1-&gt;4)-beta-D-Glc-(1&lt;-&gt;1)-Cer(d18:1(4E)) + CMP-N-acetyl-beta-neuraminate = a ganglioside GM3 (d18:1(4E)) + CMP + H(+). The catalysed reaction is ganglioside GA2 (d18:1(4E)/18:0) + CMP-N-acetyl-beta-neuraminate = ganglioside GM2 (d18:1(4E)/18:0) + CMP + H(+). It catalyses the reaction a beta-D-Gal-(1&lt;-&gt;1')-ceramide + CMP-N-acetyl-beta-neuraminate = N-acetyl-alpha-neuraminosyl-(2-&gt;3)-beta-D-galactosyl-(1&lt;-&gt;1')-ceramide + CMP + H(+). The enzyme catalyses a beta-D-galactosyl-(1&lt;-&gt;1')-N-acylsphing-4-enine + CMP-N-acetyl-beta-neuraminate = a ganglioside GM4 (d18:1(4E)) + CMP + H(+). It carries out the reaction ganglioside GA1 (d18:1(4E)/18:0) + CMP-N-acetyl-beta-neuraminate = ganglioside GM1 (d18:1(4E)/18:0) + CMP + H(+). Its pathway is glycolipid biosynthesis. In terms of biological role, transfers the sialyl group (N-acetyl-alpha-neuraminyl or NeuAc) from CMP-NeuAc to the non-reducing terminal galactose (Gal) of glycosphingolipids forming gangliosides (important molecules involved in the regulation of multiple cellular processes, including cell proliferation and differentiation, apoptosis, embryogenesis, development, and oncogenesis). Mainly involved in the biosynthesis of ganglioside GM3 but can also use different glycolipids as substrate acceptors such as D-galactosylceramide (GalCer), asialo-GM2 (GA2) and asialo-GM1 (GA1), although less preferentially than beta-D-Gal-(1-&gt;4)-beta-D-Glc-(1&lt;-&gt;1)-Cer (LacCer). This Homo sapiens (Human) protein is Lactosylceramide alpha-2,3-sialyltransferase (ST3GAL5).